Here is a 156-residue protein sequence, read N- to C-terminus: uncharacterized protein (156 aa).

The first 27 residues, 1–27 (MKLLVLRLILIISTIFVLLNLSCMVNG), serve as a signal peptide directing secretion. N20, N83, N103, N106, and N134 each carry an N-linked (GlcNAc...) asparagine glycan.

The protein resides in the secreted. This is an uncharacterized protein from Dictyostelium discoideum (Social amoeba).